Reading from the N-terminus, the 66-residue chain is Probable cytochrome b-c1 complex subunit 9 (66 aa).

Over 1–20 (MSNALTNIFYKYVARRNSTW) the chain is Mitochondrial matrix. The helical transmembrane segment at 21 to 46 (MAGAILGAFVLDSTVSGAVNTFFDSV) threads the bilayer. The Mitochondrial intermembrane segment spans residues 47–66 (NKGKLWKDVYAERVKKGISQ).

This sequence belongs to the UQCR10/QCR9 family. In terms of assembly, component of the ubiquinol-cytochrome c oxidoreductase (cytochrome b-c1 complex, complex III, CIII), a multisubunit enzyme composed of 3 respiratory subunits cytochrome b, cytochrome c1 and Rieske protein, 2 core protein subunits, and additional low-molecular weight protein subunits. The complex exists as an obligatory dimer and forms supercomplexes (SCs) in the inner mitochondrial membrane with cytochrome c oxidase (complex IV, CIV).

The protein localises to the mitochondrion inner membrane. In terms of biological role, component of the ubiquinol-cytochrome c oxidoreductase, a multisubunit transmembrane complex that is part of the mitochondrial electron transport chain which drives oxidative phosphorylation. The respiratory chain contains 3 multisubunit complexes succinate dehydrogenase (complex II, CII), ubiquinol-cytochrome c oxidoreductase (cytochrome b-c1 complex, complex III, CIII) and cytochrome c oxidase (complex IV, CIV), that cooperate to transfer electrons derived from NADH and succinate to molecular oxygen, creating an electrochemical gradient over the inner membrane that drives transmembrane transport and the ATP synthase. The cytochrome b-c1 complex catalyzes electron transfer from ubiquinol to cytochrome c, linking this redox reaction to translocation of protons across the mitochondrial inner membrane, with protons being carried across the membrane as hydrogens on the quinol. In the process called Q cycle, 2 protons are consumed from the matrix, 4 protons are released into the intermembrane space and 2 electrons are passed to cytochrome c. The polypeptide is Probable cytochrome b-c1 complex subunit 9 (Dictyostelium discoideum (Social amoeba)).